The primary structure comprises 359 residues: Carbamoyl phosphate synthase arginine-specific small chain (359 aa).

A CPSase region spans residues Met-1–His-168. L-glutamine contacts are provided by Ser-45, Gly-216, and Gly-218. The Glutamine amidotransferase type-1 domain occupies His-168 to Glu-355. Residue Cys-243 is the Nucleophile of the active site. 4 residues coordinate L-glutamine: Leu-244, Gln-247, Asn-285, and Tyr-288. Residues His-328 and Glu-330 contribute to the active site.

Belongs to the CarA family. As to quaternary structure, composed of two chains; the small (or glutamine) chain promotes the hydrolysis of glutamine to ammonia, which is used by the large (or ammonia) chain to synthesize carbamoyl phosphate. Tetramer of heterodimers (alpha,beta)4.

The catalysed reaction is hydrogencarbonate + L-glutamine + 2 ATP + H2O = carbamoyl phosphate + L-glutamate + 2 ADP + phosphate + 2 H(+). It carries out the reaction L-glutamine + H2O = L-glutamate + NH4(+). Its pathway is amino-acid biosynthesis; L-arginine biosynthesis; carbamoyl phosphate from bicarbonate: step 1/1. Its function is as follows. Small subunit of the glutamine-dependent carbamoyl phosphate synthetase (CPSase). CPSase catalyzes the formation of carbamoyl phosphate from the ammonia moiety of glutamine, carbonate, and phosphate donated by ATP, constituting the first step of the biosynthetic pathway leading to arginine and/or urea. The small subunit (glutamine amidotransferase) binds and cleaves glutamine to supply the large subunit with the substrate ammonia. The polypeptide is Carbamoyl phosphate synthase arginine-specific small chain (Halalkalibacterium halodurans (strain ATCC BAA-125 / DSM 18197 / FERM 7344 / JCM 9153 / C-125) (Bacillus halodurans)).